The primary structure comprises 143 residues: Transcriptional regulator MraZ (143 aa).

SpoVT-AbrB domains follow at residues 5 to 47 (TYTP…PRAA) and 76 to 119 (TDEQ…DAQA).

It belongs to the MraZ family. In terms of assembly, forms oligomers.

Its subcellular location is the cytoplasm. It localises to the nucleoid. The protein is Transcriptional regulator MraZ of Mycobacterium bovis (strain ATCC BAA-935 / AF2122/97).